Consider the following 134-residue polypeptide: Replication enhancer protein (134 aa).

Belongs to the geminiviridae replication enhancer protein family. In terms of assembly, homooligomer. Interacts with the replication-associated protein (REP). Interacts with host proliferating cell nuclear antigen (PCNA). Interacts with host retinoblastoma-related protein 1 (RBR1), and may thereby deregulate the host cell cycle. Oligomerization and interaction with PCNA are necessary for optimal replication enhancement.

Its function is as follows. Increases viral DNA accumulation. Enhances infectivity and symptom expression. This chain is Replication enhancer protein, found in Tomato yellow leaf curl Sardinia virus (TYLCSV).